The following is a 156-amino-acid chain: Peptide deformylase 1 (156 aa).

2 residues coordinate Fe cation: cysteine 90 and histidine 132. The active site involves glutamate 133. Residue histidine 136 coordinates Fe cation.

It belongs to the polypeptide deformylase family. The cofactor is Fe(2+).

It catalyses the reaction N-terminal N-formyl-L-methionyl-[peptide] + H2O = N-terminal L-methionyl-[peptide] + formate. Its function is as follows. Removes the formyl group from the N-terminal Met of newly synthesized proteins. Requires at least a dipeptide for an efficient rate of reaction. N-terminal L-methionine is a prerequisite for activity but the enzyme has broad specificity at other positions. The sequence is that of Peptide deformylase 1 from Bacillus cereus (strain ATCC 14579 / DSM 31 / CCUG 7414 / JCM 2152 / NBRC 15305 / NCIMB 9373 / NCTC 2599 / NRRL B-3711).